Here is a 509-residue protein sequence, read N- to C-terminus: Putative thymidine phosphorylase (509 aa).

It belongs to the thymidine/pyrimidine-nucleoside phosphorylase family. Type 2 subfamily.

It catalyses the reaction thymidine + phosphate = 2-deoxy-alpha-D-ribose 1-phosphate + thymine. The sequence is that of Putative thymidine phosphorylase from Bradyrhizobium sp. (strain ORS 278).